The sequence spans 511 residues: Maturase K (511 aa).

It belongs to the intron maturase 2 family. MatK subfamily.

It is found in the plastid. The protein resides in the chloroplast. Functionally, usually encoded in the trnK tRNA gene intron. Probably assists in splicing its own and other chloroplast group II introns. This chain is Maturase K, found in Poa pratensis (Kentucky bluegrass).